The chain runs to 273 residues: Nitrogenase iron protein (273 aa).

8 to 15 (GKGGIGKS) serves as a coordination point for ATP. Cys-95 lines the [4Fe-4S] cluster pocket. ADP-ribosylarginine; by dinitrogenase reductase ADP-ribosyltransferase is present on Arg-98. Residue Cys-130 participates in [4Fe-4S] cluster binding.

The protein belongs to the NifH/BchL/ChlL family. As to quaternary structure, homodimer. [4Fe-4S] cluster serves as cofactor. The reversible ADP-ribosylation of Arg-98 inactivates the nitrogenase reductase and regulates nitrogenase activity.

It catalyses the reaction N2 + 8 reduced [2Fe-2S]-[ferredoxin] + 16 ATP + 16 H2O = H2 + 8 oxidized [2Fe-2S]-[ferredoxin] + 2 NH4(+) + 16 ADP + 16 phosphate + 6 H(+). In terms of biological role, the key enzymatic reactions in nitrogen fixation are catalyzed by the nitrogenase complex, which has 2 components: the iron protein and the molybdenum-iron protein. This is Nitrogenase iron protein from Roseiflexus castenholzii (strain DSM 13941 / HLO8).